Here is a 423-residue protein sequence, read N- to C-terminus: UDP-N-acetylglucosamine 1-carboxyvinyltransferase (423 aa).

Residue 22-23 (KN) coordinates phosphoenolpyruvate. UDP-N-acetyl-alpha-D-glucosamine is bound at residue arginine 98. Catalysis depends on cysteine 122, which acts as the Proton donor. Residue cysteine 122 is modified to 2-(S-cysteinyl)pyruvic acid O-phosphothioketal. UDP-N-acetyl-alpha-D-glucosamine is bound by residues 127–131 (RPVDQ), aspartate 311, and isoleucine 333.

The protein belongs to the EPSP synthase family. MurA subfamily.

It is found in the cytoplasm. The enzyme catalyses phosphoenolpyruvate + UDP-N-acetyl-alpha-D-glucosamine = UDP-N-acetyl-3-O-(1-carboxyvinyl)-alpha-D-glucosamine + phosphate. It functions in the pathway cell wall biogenesis; peptidoglycan biosynthesis. In terms of biological role, cell wall formation. Adds enolpyruvyl to UDP-N-acetylglucosamine. This chain is UDP-N-acetylglucosamine 1-carboxyvinyltransferase, found in Stenotrophomonas maltophilia (strain K279a).